The sequence spans 132 residues: Small ribosomal subunit protein uS8 (132 aa).

This sequence belongs to the universal ribosomal protein uS8 family. In terms of assembly, part of the 30S ribosomal subunit. Contacts proteins S5 and S12.

Functionally, one of the primary rRNA binding proteins, it binds directly to 16S rRNA central domain where it helps coordinate assembly of the platform of the 30S subunit. This Mycolicibacterium vanbaalenii (strain DSM 7251 / JCM 13017 / BCRC 16820 / KCTC 9966 / NRRL B-24157 / PYR-1) (Mycobacterium vanbaalenii) protein is Small ribosomal subunit protein uS8.